The following is a 253-amino-acid chain: MTNQLMALNQVSVRNRLMPLTALVQQGEQIHIIGPNGSGKSTLLACMAGILPYSGAIDLQQKCLSQYSHCQLARYRAWLSQQISSVPIMPVFQYLQLHLAAHLVNCDGVLSELCSFFKLGKFLETPVGNLSGGEWQRVRLTGVFLQVWPSINLEGKLLLLDEPTNNLDITQVAALDLLIKKFCELGGTVVMSGHDLNHSYDKADRIWLLADGSLVANGKPDEVMKENTLSRVFAADIKCVPEKTDKYWRVFLP.

An ABC transporter domain is found at 1-236 (MTNQLMALNQ…NTLSRVFAAD (236 aa)). 34 to 41 (GPNGSGKS) contacts ATP.

This sequence belongs to the ABC transporter superfamily. Vitamin B12 importer (TC 3.A.1.13.1) family. In terms of assembly, the complex is composed of two ATP-binding proteins (BtuD), two transmembrane proteins (BtuC) and a solute-binding protein (BtuF).

The protein resides in the cell inner membrane. It carries out the reaction an R-cob(III)alamin(out) + ATP + H2O = an R-cob(III)alamin(in) + ADP + phosphate + H(+). Part of the ABC transporter complex BtuCDF involved in vitamin B12 import. Responsible for energy coupling to the transport system. The protein is Vitamin B12 import ATP-binding protein BtuD of Photorhabdus laumondii subsp. laumondii (strain DSM 15139 / CIP 105565 / TT01) (Photorhabdus luminescens subsp. laumondii).